The sequence spans 101 residues: Integration host factor subunit alpha (101 aa).

It belongs to the bacterial histone-like protein family. Heterodimer of an alpha and a beta chain.

Its function is as follows. This protein is one of the two subunits of integration host factor, a specific DNA-binding protein that functions in genetic recombination as well as in transcriptional and translational control. The polypeptide is Integration host factor subunit alpha (Halorhodospira halophila (strain DSM 244 / SL1) (Ectothiorhodospira halophila (strain DSM 244 / SL1))).